A 253-amino-acid polypeptide reads, in one-letter code: Large ribosomal subunit protein uL4 (253 aa).

The disordered stretch occupies residues serine 78 to threonine 107. Residues arginine 82 to proline 94 show a composition bias toward basic residues. Over residues proline 95–threonine 107 the composition is skewed to basic and acidic residues.

The protein belongs to the universal ribosomal protein uL4 family. As to quaternary structure, part of the 50S ribosomal subunit.

One of the primary rRNA binding proteins, this protein initially binds near the 5'-end of the 23S rRNA. It is important during the early stages of 50S assembly. It makes multiple contacts with different domains of the 23S rRNA in the assembled 50S subunit and ribosome. Its function is as follows. Forms part of the polypeptide exit tunnel. This chain is Large ribosomal subunit protein uL4, found in Methanosarcina acetivorans (strain ATCC 35395 / DSM 2834 / JCM 12185 / C2A).